A 262-amino-acid chain; its full sequence is Ribosomal RNA small subunit methyltransferase A (262 aa).

Residues His-16, Leu-18, Gly-43, Glu-64, Asp-89, and Asn-109 each contribute to the S-adenosyl-L-methionine site.

Belongs to the class I-like SAM-binding methyltransferase superfamily. rRNA adenine N(6)-methyltransferase family. RsmA subfamily.

It is found in the cytoplasm. The enzyme catalyses adenosine(1518)/adenosine(1519) in 16S rRNA + 4 S-adenosyl-L-methionine = N(6)-dimethyladenosine(1518)/N(6)-dimethyladenosine(1519) in 16S rRNA + 4 S-adenosyl-L-homocysteine + 4 H(+). Specifically dimethylates two adjacent adenosines (A1518 and A1519) in the loop of a conserved hairpin near the 3'-end of 16S rRNA in the 30S particle. May play a critical role in biogenesis of 30S subunits. The protein is Ribosomal RNA small subunit methyltransferase A of Xanthomonas euvesicatoria pv. vesicatoria (strain 85-10) (Xanthomonas campestris pv. vesicatoria).